Consider the following 432-residue polypeptide: Tryptophan--tRNA ligase (432 aa).

ATP-binding positions include 13-15 and 21-22; these read TTS and GN. Residues 14 to 22 carry the 'HIGH' region motif; that stretch reads TSGTPHLGN. Aspartate 146 contacts L-tryptophan. Residues 158-160, leucine 198, and 205-209 each bind ATP; these read GRD and KMSKS. A 'KMSKS' region motif is present at residues 205-209; that stretch reads KMSKS.

Belongs to the class-I aminoacyl-tRNA synthetase family. As to quaternary structure, homodimer.

It is found in the cytoplasm. The enzyme catalyses tRNA(Trp) + L-tryptophan + ATP = L-tryptophyl-tRNA(Trp) + AMP + diphosphate + H(+). In terms of biological role, catalyzes the attachment of tryptophan to tRNA(Trp). The chain is Tryptophan--tRNA ligase from Xanthomonas axonopodis pv. citri (strain 306).